The sequence spans 403 residues: Phosphoglycerate kinase (403 aa).

Residues 21–23, arginine 36, 59–62, arginine 119, and arginine 159 each bind substrate; these read DFN and HLGR. ATP is bound by residues lysine 214, glycine 301, glutamate 332, and 359–362; that span reads GGDS.

This sequence belongs to the phosphoglycerate kinase family. In terms of assembly, monomer.

It localises to the cytoplasm. The enzyme catalyses (2R)-3-phosphoglycerate + ATP = (2R)-3-phospho-glyceroyl phosphate + ADP. The protein operates within carbohydrate degradation; glycolysis; pyruvate from D-glyceraldehyde 3-phosphate: step 2/5. The protein is Phosphoglycerate kinase of Lactobacillus acidophilus (strain ATCC 700396 / NCK56 / N2 / NCFM).